Reading from the N-terminus, the 421-residue chain is Hemagglutinin-esterase (421 aa).

The first 16 residues, 1 to 16 (MFLLPRFILVSCIIGS), serve as a signal peptide directing secretion. Positions 7–127 (FILVSCIIGS…SNDIWMQNKG (121 aa)) are esterase domain 1. The Virion surface segment spans residues 17 to 392 (LGFDNPPTNV…PICVYDPLPL (376 aa)). Ser40 functions as the Nucleophile in the catalytic mechanism. The cysteines at positions 44 and 65 are disulfide-linked. Asn54, Asn89, Asn153, Asn236, and Asn301 each carry an N-linked (GlcNAc...) asparagine; by host glycan. Disulfide bonds link Cys113–Cys162, Cys197–Cys276, and Cys205–Cys249. The interval 128–266 (LFYTQVYKNM…GNYLAISNEL (139 aa)) is receptor binding. Residues 267–379 (LLTVPTKAIC…RCPTAADINT (113 aa)) are esterase domain 2. An intrachain disulfide couples Cys307 to Cys312. N-linked (GlcNAc...) asparagine; by host glycosylation occurs at Asn316. Residues Asp326 and His329 each act as charge relay system in the active site. An intrachain disulfide couples Cys347 to Cys371. N-linked (GlcNAc...) asparagine; by host glycosylation occurs at Asn358. A helical transmembrane segment spans residues 393–413 (ILLGILLGVAVIIIVVLLLYF). Topologically, residues 414 to 421 (MVENGTRL) are intravirion. Asn417 carries an N-linked (GlcNAc...) asparagine; by host glycan.

The protein belongs to the influenza type C/coronaviruses hemagglutinin-esterase family. As to quaternary structure, homodimer; disulfide-linked. Forms a complex with the M protein in the pre-Golgi. Associates then with S-M complex to form a ternary complex S-M-HE. N-glycosylated in the host RER.

The protein resides in the virion membrane. The protein localises to the host cell membrane. The catalysed reaction is N-acetyl-9-O-acetylneuraminate + H2O = N-acetylneuraminate + acetate + H(+). It catalyses the reaction N-acetyl-4-O-acetylneuraminate + H2O = N-acetylneuraminate + acetate + H(+). Functionally, structural protein that makes short spikes at the surface of the virus. Contains receptor binding and receptor-destroying activities. Mediates de-O-acetylation of N-acetyl-4-O-acetylneuraminic acid, which is probably the receptor determinant recognized by the virus on the surface of erythrocytes and susceptible cells. This receptor-destroying activity is important for virus release as it probably helps preventing self-aggregation and ensures the efficient spread of the progeny virus from cell to cell. May serve as a secondary viral attachment protein for initiating infection, the spike protein being the major one. May become a target for both the humoral and the cellular branches of the immune system. The chain is Hemagglutinin-esterase from Bos taurus (Bovine).